The following is a 593-amino-acid chain: Protein GAMETE EXPRESSED 1 (593 aa).

A signal peptide spans 1–24; the sequence is MDRFSRKCLLFLLLIILLDSPLTC. Residues 25–427 are Extracellular-facing; that stretch reads HSWGWFSSSS…LHNAMLLESR (403 aa). Coiled coils occupy residues 156-194 and 350-387; these read CQQL…SKSD and EALQ…HDHL. A helical transmembrane segment spans residues 428 to 448; the sequence is VIKAFVIYFLSIFVIYMFTST. Topologically, residues 449–457 are cytoplasmic; that stretch reads KQTYIIRPR. The chain crosses the membrane as a helical span at residues 458-476; sequence LYIGLCVTLALEVASLRYV. The Extracellular portion of the chain corresponds to 477–485; sequence NDTERQAWM. A helical transmembrane segment spans residues 486–506; it reads INLIRSLFALLASAQLLHAAL. Topologically, residues 507-593 are cytoplasmic; sequence SYRDYEVLNH…TRRLYNFRPR (87 aa).

As to quaternary structure, homodimer. In tricellular pollen, expressed in mature sperm cells. Not expressed in bicellular or unicellular pollen. Detected in ovules, roots and guard cells. Expressed in the embryo sac before cellularization, in the egg cell after cellularization, in the zygote/embryo immediately after fertilization and in the pollen vegetative cell.

It is found in the cell membrane. Has a dual function during gametophyte development and early embryogenesis. Required for correct pollen maturation. In Arabidopsis thaliana (Mouse-ear cress), this protein is Protein GAMETE EXPRESSED 1 (GEX1).